The chain runs to 21 residues: Serine protease inhibitor 3 (21 aa).

This sequence belongs to the protease inhibitor I3 (leguminous Kunitz-type inhibitor) family. Tubers.

The protein resides in the vacuole. Its function is as follows. Inhibits trypsin and chymotrypsin (serine proteases). Does not inhibit elastase, subtilisin, cathepsin L nor papain (serine and cysteine proteases). Protects the plant by inhibiting proteases of invading organisms, decreasing both hyphal growth and zoospores germination of Phytophthora infestans. This Solanum tuberosum (Potato) protein is Serine protease inhibitor 3.